The primary structure comprises 517 residues: Pentatricopeptide repeat-containing protein At5g42450, mitochondrial (517 aa).

The N-terminal 23 residues, 1–23, are a transit peptide targeting the mitochondrion; the sequence is MLHMILSQRVILLRKYHSSANAL. PPR repeat units follow at residues 57–91, 92–126, 127–157, 158–188, 189–223, 225–259, 261–291, 294–329, and 368–398; these read DVISATAVIGRFVKESRHVEASQAFKRLLCLGIRP, NEFTFGTVIGSSTTSRDVKLGKQLHCYALKMGLAS, NVFVGSAVLNCYVKLSTLTDARRCFDDTRDP, NVVSITNLISGYLKKHEFEEALSLFRAMPER, SVVTWNAVIGGFSQTGRNEEAVNTFVDMLREGVVI, NESTFPCAITAISNIASHGAGKSIHACAIKFLGKR, NVFVWNSLISFYSKCGNMEDSLLAFNKLEEE, NIVSWNSMIWGYAHNGRGEEAVAMFEKMVKDTNLRP, and ELEHYACMVDMLSRSGRFKEAEELIKSMPLD. Residues 403–478 form a type E motif region; the sequence is FWKALLGGCQ…FTGCSWIEVR (76 aa). A type E(+) motif region spans residues 479-509; that stretch reads DQIRVFVNADKNNELKDEVYRMLALVSQHLE.

The protein belongs to the PPR family. PCMP-E subfamily.

Its subcellular location is the mitochondrion. The protein is Pentatricopeptide repeat-containing protein At5g42450, mitochondrial (PCMP-E102) of Arabidopsis thaliana (Mouse-ear cress).